A 119-amino-acid chain; its full sequence is Protein yippee-like 1 (119 aa).

The 98-residue stretch at 19 to 116 folds into the Yippee domain; sequence RTYSCIHCRA…IELAHMIKDN (98 aa). Zn(2+) is bound by residues Cys23, Cys26, Cys79, and Cys82. A Nuclear localization signal motif is present at residues 99–104; it reads KYKEGK.

It belongs to the yippee family.

It is found in the nucleus. Its function is as follows. May play a role in epithelioid conversion of fibroblasts. The protein is Protein yippee-like 1 (YPEL1) of Chlorocebus aethiops (Green monkey).